The chain runs to 141 residues: Hemoglobin subunit beta-C (141 aa).

One can recognise a Globin domain in the interval 1–141 (PNKALITGFW…VASALAHRYH (141 aa)). Heme b is bound by residues His-58 and His-87.

The protein belongs to the globin family. As to quaternary structure, heterotetramer of two alpha chains and two beta chains. As to expression, red blood cells.

Involved in oxygen transport from the lung to the various peripheral tissues. The protein is Hemoglobin subunit beta-C (HBBC) of Ovis aries musimon (Mouflon).